We begin with the raw amino-acid sequence, 760 residues long: DNA replication licensing factor mcm7 (760 aa).

One can recognise an MCM domain in the interval 353 to 559 (VYEKLAKSIA…ETDEHLAQHV (207 aa)). ATP-binding residues include Tyr366, Gly406, Ala408, Lys409, Ser410, Asn511, Arg536, and Arg630. The Arginine finger signature appears at 535–538 (SRFD).

This sequence belongs to the MCM family. In terms of assembly, component of the mcm2-7 complex. The complex forms a toroidal hexameric ring with the proposed subunit order mcm2-mcm6-mcm4-mcm7-mcm3-mcm5. The heterodimers of mcm4/mcm6 and mcm3/mcm5 interact with mcm2 and mcm7. Interacts with sld3 and mcm10.

Its subcellular location is the nucleus. The enzyme catalyses ATP + H2O = ADP + phosphate + H(+). In terms of biological role, acts as a component of the MCM2-7 complex (MCM complex) which is the replicative helicase essential for 'once per cell cycle' DNA replication initiation and elongation in eukaryotic cells. Core component of CDC45-MCM-GINS (CMG) helicase, the molecular machine that unwinds template DNA during replication, and around which the replisome is built. The active ATPase sites in the MCM2-7 ring are formed through the interaction surfaces of two neighboring subunits such that a critical structure of a conserved arginine finger motif is provided in trans relative to the ATP-binding site of the Walker A box of the adjacent subunit. The six ATPase active sites, however, are likely to contribute differentially to the complex helicase activity. Required for the progression of S phase. The sequence is that of DNA replication licensing factor mcm7 (mcm7) from Schizosaccharomyces pombe (strain 972 / ATCC 24843) (Fission yeast).